The primary structure comprises 32 residues: Zinc metalloproteinase carinactivase-1 catalytic subunit (32 aa).

Residues 10 to 32 form the Peptidase M12B domain; it reads FIKLVIVVDHSMVXKXNNDLIAI.

Belongs to the venom metalloproteinase (M12B) family. P-III subfamily. P-IIId sub-subfamily. In terms of assembly, heterodimer of a metalloproteinase subunit and a regulatory subunit comprising two disulfide-linked lectins (14 kDa and 17 kDa chains) (AC Q9PRP7 and AC Q9PRP8). Zn(2+) serves as cofactor. In terms of tissue distribution, expressed by the venom gland.

The protein localises to the secreted. Calcium-dependent prothrombin (F2) activator. This protein may activate prothrombin via recognition by the regulatory subunit of the calcium ion bound conformation of its gamma-carboxyglutamic acid (GLA) domain, and the subsequent conversion of prothrombin to active thrombin is catalyzed by the catalytic subunit. The polypeptide is Zinc metalloproteinase carinactivase-1 catalytic subunit (Echis carinatus (Saw-scaled viper)).